Here is an 878-residue protein sequence, read N- to C-terminus: Calcium-transporting ATPase 1 (878 aa).

The next 4 helical transmembrane spans lie at 50-72 (LFID…VQLF), 76-95 (FVES…VAVV), 243-263 (LGWV…LRLF), and 281-301 (FAVA…VTIV). Residues Val-287, Ala-288, Ile-290, and Glu-292 each coordinate Ca(2+). Catalysis depends on Asp-334, which acts as the 4-aspartylphosphate intermediate. A run of 6 helical transmembrane segments spans residues 681–701 (LFSG…VGWV), 704–724 (FTAL…AIAL), 753–773 (VILI…YVGQ), 779–799 (MGVA…TFAA), 816–836 (YVLM…LPFL), and 845–865 (AFGW…VICM). Ca(2+)-binding residues include Asn-713 and Asp-717.

Belongs to the cation transport ATPase (P-type) (TC 3.A.3) family. Type IIA subfamily.

It is found in the cell membrane. The enzyme catalyses Ca(2+)(in) + ATP + H2O = Ca(2+)(out) + ADP + phosphate + H(+). Inhibited by very high concentrations of cyclopiazonic acid (CPA). Functionally, catalyzes the hydrolysis of ATP coupled with the transport of calcium. This chain is Calcium-transporting ATPase 1 (yoaB), found in Lactococcus lactis subsp. lactis (strain IL1403) (Streptococcus lactis).